We begin with the raw amino-acid sequence, 1957 residues long: [F-actin]-monooxygenase MICAL2 (1957 aa).

The monooxygenase domain stretch occupies residues 2–494 (GENEDEKQAQ…KHLYITKELE (493 aa)). Residues Cys-97, 116–118 (EKR), 123–125 (RNN), Phe-183, Tyr-298, and Asp-398 each bind FAD. Residues 516–619 (DIRPSKLLTW…MVMYLSKFYE (104 aa)) enclose the Calponin-homology (CH) domain. Ser-631 carries the phosphoserine modification. The Nuclear localization signal motif lies at 660–681 (RKRTPRVDGQTGENDMNKRRRK). 2 disordered regions span residues 660–714 (RKRT…NQNK) and 886–942 (QNKL…HPSH). Residues 687-714 (DEPSNFSSRSLGSNQECGSSKEGGNQNK) are compositionally biased toward polar residues. Residues 899–910 (PPSPPSRLPSPD) show a composition bias toward pro residues. The span at 911–925 (PAASSSPSTVDSASP) shows a compositional bias: low complexity. In terms of domain architecture, LIM zinc-binding spans 1000–1062 (DTCYFCKKRV…KPHFIHCKTN (63 aa)). Residues Cys-1002, Cys-1005, His-1023, Cys-1026, Cys-1029, Cys-1032, Cys-1052, and His-1055 each coordinate Zn(2+). Disordered regions lie at residues 1070–1143 (AELK…PSEW), 1168–1243 (SEDS…TPSK), 1258–1345 (VNKR…LYLP), 1361–1431 (GEDG…EGGP), 1467–1626 (KAGE…SPPC), and 1675–1779 (ESRQ…KEKK). Basic and acidic residues predominate over residues 1185–1195 (SHTEPCEEKPW). The segment covering 1232-1243 (RANSFQSPTPSK) has biased composition (polar residues). A compositionally biased stretch (low complexity) spans 1275–1294 (LPSSSSHSSSPPSSSSTSVS). Residues 1302–1316 (SPPQMTASEPLSQVS) show a composition bias toward polar residues. Residues 1324 to 1363 (TPNFRRRAVAQGAPREIPLYLPHHPKPEWAEYCLVSPGED) are interaction with MAPK1. Composition is skewed to basic and acidic residues over residues 1388–1402 (SNHR…KDRS) and 1413–1431 (GEDR…EGGP). Low complexity predominate over residues 1485–1496 (VLKPVRPLLLPR). Residues 1552–1562 (GGKKAWAKQES) show a composition bias toward basic and acidic residues. Over residues 1570–1579 (CTRSFSLRKT) the composition is skewed to polar residues. Position 1688 is a phosphoserine (Ser-1688). Pro residues predominate over residues 1718–1733 (APPPPPPPPPPPPPPT). A compositionally biased stretch (low complexity) spans 1751–1762 (ASSSASSTSSSS). Residues 1796-1945 (KQEELKRLYK…EKAEDQHFES (150 aa)) enclose the bMERB domain.

This sequence belongs to the Mical family. As to quaternary structure, interacts with PLXNA4. Interacts with RAB1B. Interacts with MAPK1/ERK2. Interacts with RAB35, RAB8A, RAB10, RAB13 and RAB15 (in their GTP-bound forms); binding to RAB35 is of low affinity compared to other Rab proteins; at least in case of RAB8A may bind 2 molecules of RAB8A simultaneously through a high and a low affinity binding site, respectively. May interact with MAPK1/ERK2. Interacts with CORO1C; this interaction recruits MICAL2 to the actin filaments. It depends on FAD as a cofactor.

It is found in the nucleus. The protein resides in the cytoplasm. It catalyses the reaction L-methionyl-[F-actin] + NADPH + O2 + H(+) = L-methionyl-(R)-S-oxide-[F-actin] + NADP(+) + H2O. Its activity is regulated as follows. Specifically inhibited by CCG-1423, a small molecule inhibitor of SRF:MKL1/MRTF-A-dependent transcription. Its function is as follows. Methionine monooxygenase that promotes depolymerization of F-actin by mediating oxidation of residues 'Met-44' and 'Met-47' on actin to form methionine-sulfoxide, resulting in actin filament disassembly and preventing repolymerization. Regulates the disassembly of branched actin networks also by oxidizing ARP3B-containing ARP2/3 complexes leading to ARP3B dissociation from the network. Acts as a key regulator of the SRF signaling pathway elicited by nerve growth factor and serum: mediates oxidation and subsequent depolymerization of nuclear actin, leading to increase MKL1/MRTF-A presence in the nucleus and promote SRF:MKL1/MRTF-A-dependent gene transcription. Does not activate SRF:MKL1/MRTF-A through RhoA. The chain is [F-actin]-monooxygenase MICAL2 from Homo sapiens (Human).